A 166-amino-acid polypeptide reads, in one-letter code: Interferon gamma-related (166 aa).

Positions 1 to 26 (MYCRLNMVYLICALLLIVSLQGTVGA) are cleaved as a signal peptide. N91 is a glycosylation site (N-linked (GlcNAc...) asparagine).

This sequence belongs to the type II (or gamma) interferon family. Homodimer. In terms of tissue distribution, strongly expressed in spleen. Also detected at lower levels in gill, kidney, heart, brain and intestine. In immune cell populations, expressed at highest levels in peripheral blood leukocytes and at lower levels in splenocytes, granulocytes, monocytes and macrophages.

Its subcellular location is the secreted. Cytokine which binds to interferon gamma receptor 1 (ifngr1). Has activating effects on primary macrophages. Induces nitric oxide production and phagocytic responses in macrophages. Primes monocytes for production of reactive oxygen intermediates (ROI), although the effect is short-lived. Also has inhibitory effects on monocyte priming by ifng1 (interferon gamma 1) and tnfb (TNF-alpha 2). Stimulates phosphorylation of the JAK/STAT signal transducer stat1, but fails to induce stat1 nuclear localization. Promotes increased expression of a number of genes important for macrophage activity, including the interferon regulatory factors irf2 and irf9. This Carassius auratus (Goldfish) protein is Interferon gamma-related.